The primary structure comprises 374 residues: Tomoregulin-2 (374 aa).

The signal sequence occupies residues 1-40 (MVLWESPRQCSSWTLCEGFCWLLLLPVTLLIIARPVKLAA). The Extracellular segment spans residues 41–320 (FPTSLSDCQT…VPGPVRFQYV (280 aa)). The N-linked (GlcNAc...) asparagine glycan is linked to asparagine 55. Kazal-like domains follow at residues 90–137 (VCQF…SCAT) and 181–229 (VCNI…RCQD). 6 cysteine pairs are disulfide-bonded: cysteine 91–cysteine 121, cysteine 95–cysteine 114, cysteine 103–cysteine 135, cysteine 182–cysteine 213, cysteine 186–cysteine 206, and cysteine 195–cysteine 227. Asparagine 230 is a glycosylation site (N-linked (GlcNAc...) asparagine). Positions 261-301 (HHIPCPEHYNGFCMHGKCEHSINMQEPSCRCDAGYTGQHCE) constitute an EGF-like domain. 3 cysteine pairs are disulfide-bonded: cysteine 265-cysteine 278, cysteine 273-cysteine 289, and cysteine 291-cysteine 300. Residues 303-320 (KDYSVLYVVPGPVRFQYV) form a required for shedding region. Residues 321 to 341 (LIAAVIGTIQIAVICVVVLCI) traverse the membrane as a helical segment. The Cytoplasmic segment spans residues 342-374 (TRKCPRSNRIHRQKQNTGHYSSDNTTRASTRLI). Residues 353–374 (RQKQNTGHYSSDNTTRASTRLI) are disordered. Positions 356 to 374 (QNTGHYSSDNTTRASTRLI) are enriched in polar residues.

This sequence belongs to the tomoregulin family. In terms of processing, O-glycosylated; contains chondroitin sulfate glycosaminoglycans. Post-translationally, a soluble form (TMEFF2-ECD) is produced by proteolytic shedding. This shedding can be induced by phorbol ester or pro-inflammatory cytokines such as TNFalpha, and is mediated by a metalloproteinase ADAM. Widely expressed in the brain. In the olfactory bulb expressed in mitral cell, granule, and glomerular layers. In the hippocampus expressed in hippocampal cornu ammonis, pyramidal layer, dentate gyrus, and substantia nigra pars compacta.

The protein resides in the membrane. In terms of biological role, may be a survival factor for hippocampal and mesencephalic neurons. The shedded form may up-regulate cell proliferation. This Mus musculus (Mouse) protein is Tomoregulin-2 (Tmeff2).